The sequence spans 130 residues: Hypocretin neuropeptide precursor (130 aa).

Residues 1 to 32 form the signal peptide; the sequence is MNFPSTKVPWAAVTLLLLLLLPPALLSLGVDA. Glutamine 33 bears the Pyrrolidone carboxylic acid mark. 2 disulfide bridges follow: cysteine 38–cysteine 44 and cysteine 39–cysteine 46. Position 65 is a leucine amide (leucine 65). Methionine 96 is subject to Methionine amide. Positions 97 to 130 are excised as a propeptide; the sequence is GRRAGAELEPHPCSGRGCPTVTTTALAPRGGSGV.

Belongs to the orexin family. In terms of processing, specific enzymatic cleavages at paired basic residues yield the different active peptides. As to expression, restricted to neuronal cell bodies of the dorsal and lateral hypothalamus.

The protein localises to the rough endoplasmic reticulum. The protein resides in the cytoplasmic vesicle. Its subcellular location is the synapse. Neuropeptides that play a significant role in the regulation of food intake and sleep-wakefulness, possibly by coordinating the complex behavioral and physiologic responses of these complementary homeostatic functions. A broader role in the homeostatic regulation of energy metabolism, autonomic function, hormonal balance and the regulation of body fluids, is also suggested. In terms of biological role, binds to orexin receptors HCRTR1/OX1R and HCRTR2/OX2R with a high affinity. Stimulates food intake. Modulates pituitary luteinizing hormone secretion in an ovarian steroid-dependent manner. Functionally, binds to orexin receptor HCRTR2/OX2R only. Stimulates food intake. Modulates pituitary luteinizing hormone secretion in an ovarian steroid-dependent manner. The chain is Hypocretin neuropeptide precursor (Hcrt) from Mus musculus (Mouse).